The primary structure comprises 262 residues: Lysosomal-associated transmembrane protein 5 (262 aa).

5 helical membrane-spanning segments follow: residues 19 to 39 (IATTALAIYHVIMSVLLFIEH), 64 to 84 (ISSFLLITMLFIISLSLLIGV), 92 to 112 (LLPFLSLQIMDYLLCLLTLLG), 134 to 154 (FPLMTLQLLDFCLSILTLCSS), and 184 to 204 (FIKMMIIFSIAFITVLIFKVY). At Tyr-259 the chain carries Phosphotyrosine.

Belongs to the LAPTM4/LAPTM5 transporter family. In terms of assembly, binds to ubiquitin. In terms of tissue distribution, preferentially expressed in adult hematopoietic tissues. High levels in lymphoid and myeloid tissues. Highly expressed in peripheral blood leukocytes, thymus, spleen and lung, followed by placenta, liver and kidney.

It localises to the lysosome membrane. In terms of biological role, may have a special functional role during embryogenesis and in adult hematopoietic cells. The chain is Lysosomal-associated transmembrane protein 5 (LAPTM5) from Homo sapiens (Human).